The primary structure comprises 176 residues: ATP synthase subunit b (176 aa).

A helical membrane pass occupies residues 14–34 (STTLGTMIVVSGAFLILMLLL).

Belongs to the ATPase B chain family. In terms of assembly, F-type ATPases have 2 components, F(1) - the catalytic core - and F(0) - the membrane proton channel. F(1) has five subunits: alpha(3), beta(3), gamma(1), delta(1), epsilon(1). F(0) has three main subunits: a(1), b(2) and c(10-14). The alpha and beta chains form an alternating ring which encloses part of the gamma chain. F(1) is attached to F(0) by a central stalk formed by the gamma and epsilon chains, while a peripheral stalk is formed by the delta and b chains.

The protein resides in the cell membrane. In terms of biological role, f(1)F(0) ATP synthase produces ATP from ADP in the presence of a proton or sodium gradient. F-type ATPases consist of two structural domains, F(1) containing the extramembraneous catalytic core and F(0) containing the membrane proton channel, linked together by a central stalk and a peripheral stalk. During catalysis, ATP synthesis in the catalytic domain of F(1) is coupled via a rotary mechanism of the central stalk subunits to proton translocation. Functionally, component of the F(0) channel, it forms part of the peripheral stalk, linking F(1) to F(0). This chain is ATP synthase subunit b, found in Enterococcus faecalis (strain ATCC 700802 / V583).